We begin with the raw amino-acid sequence, 150 residues long: MVRIAVVVSEFNYDVTQLMLQKALEHAKFLGAEVTYVVKVPGVYDIPTLLRDLVAKEEVDAVVTLGAVIQGATKHDEVVAHQAARKILDISVESGKPITLGIIGPGANRMQALERVEEYAKRAVEAAVKLARRKKTLREAKYAGSTVFID.

5-amino-6-(D-ribitylamino)uracil-binding positions include Phe11, 43–45, and 67–69; these read VYD and AVI. 72–73 is a (2S)-2-hydroxy-3-oxobutyl phosphate binding site; sequence AT. His75 functions as the Proton donor in the catalytic mechanism. Leu100 provides a ligand contact to 5-amino-6-(D-ribitylamino)uracil. Arg115 contacts (2S)-2-hydroxy-3-oxobutyl phosphate.

The protein belongs to the DMRL synthase family.

The enzyme catalyses (2S)-2-hydroxy-3-oxobutyl phosphate + 5-amino-6-(D-ribitylamino)uracil = 6,7-dimethyl-8-(1-D-ribityl)lumazine + phosphate + 2 H2O + H(+). It participates in cofactor biosynthesis; riboflavin biosynthesis; riboflavin from 2-hydroxy-3-oxobutyl phosphate and 5-amino-6-(D-ribitylamino)uracil: step 1/2. Its function is as follows. Catalyzes the formation of 6,7-dimethyl-8-ribityllumazine by condensation of 5-amino-6-(D-ribitylamino)uracil with 3,4-dihydroxy-2-butanone 4-phosphate. This is the penultimate step in the biosynthesis of riboflavin. The polypeptide is 6,7-dimethyl-8-ribityllumazine synthase (Pyrobaculum arsenaticum (strain DSM 13514 / JCM 11321 / PZ6)).